The sequence spans 115 residues: Hydrogenase maturation factor HypA (115 aa).

Residue His-2 coordinates Ni(2+). Residues Cys-73, Cys-76, Cys-89, and Cys-92 each contribute to the Zn(2+) site.

The protein belongs to the HypA/HybF family.

In terms of biological role, involved in the maturation of [NiFe] hydrogenases. Required for nickel insertion into the metal center of the hydrogenase. The chain is Hydrogenase maturation factor HypA from Aquifex aeolicus (strain VF5).